Reading from the N-terminus, the 419-residue chain is UDP-N-acetylglucosamine 1-carboxyvinyltransferase (419 aa).

22–23 lines the phosphoenolpyruvate pocket; that stretch reads KN. Arg-95 is a UDP-N-acetyl-alpha-D-glucosamine binding site. Cys-119 (proton donor) is an active-site residue. Position 119 is a 2-(S-cysteinyl)pyruvic acid O-phosphothioketal (Cys-119). UDP-N-acetyl-alpha-D-glucosamine contacts are provided by residues 164–167, Asp-308, and Ile-330; that span reads KVSV.

The protein belongs to the EPSP synthase family. MurA subfamily.

It localises to the cytoplasm. The catalysed reaction is phosphoenolpyruvate + UDP-N-acetyl-alpha-D-glucosamine = UDP-N-acetyl-3-O-(1-carboxyvinyl)-alpha-D-glucosamine + phosphate. It functions in the pathway cell wall biogenesis; peptidoglycan biosynthesis. In terms of biological role, cell wall formation. Adds enolpyruvyl to UDP-N-acetylglucosamine. The chain is UDP-N-acetylglucosamine 1-carboxyvinyltransferase from Rickettsia massiliae (strain Mtu5).